The primary structure comprises 258 residues: MNKVILRILALLFLLGIGAVSAQPDGRIVGGADTTNYHTKYVVQLRRRSSPSSSYAQTCGGCILDAVTIATAAHCVYNREAENFLVVAGDDSRGGMSGVVVRVSKLIPHELYNATIMDNDIALVIVDPPLPLASSSTMEAIEIAAEQPAVGVQATISGWGYTKENGLSSDQLQQVNVPVVDSEKCQEAYYWRPISEGMLCAGLSEGGKDACQGDSGGPLVVANKLAGIVSWGEGCARPNYPGVYANVAYFKDWIASRV.

Positions 1–22 are cleaved as a signal peptide; it reads MNKVILRILALLFLLGIGAVSA. Residues 23–27 constitute a propeptide, activation peptide; the sequence is QPDGR. One can recognise a Peptidase S1 domain in the interval 28–258; that stretch reads IVGGADTTNY…YFKDWIASRV (231 aa). A disulfide bond links Cys-59 and Cys-75. Active-site charge relay system residues include His-74 and Asp-120. 2 disulfide bridges follow: Cys-185-Cys-200 and Cys-211-Cys-235. Residue Ser-215 is the Charge relay system of the active site.

This sequence belongs to the peptidase S1 family.

It is found in the secreted. It localises to the extracellular space. The catalysed reaction is Preferential cleavage: Arg-|-Xaa, Lys-|-Xaa.. This chain is Trypsin eta (etaTry), found in Drosophila erecta (Fruit fly).